A 411-amino-acid polypeptide reads, in one-letter code: Tyrosine--tRNA ligase (411 aa).

Y34 is an L-tyrosine binding site. Positions 39-48 match the 'HIGH' region motif; the sequence is CTATSLHIGS. Y171 and Q175 together coordinate L-tyrosine. The 'KMSKS' region motif lies at 231–235; the sequence is KMGKT. Position 234 (K234) interacts with ATP. Residues 345 to 411 form the S4 RNA-binding domain; it reads ISAYELFHEA…GKKKHILVRV (67 aa).

It belongs to the class-I aminoacyl-tRNA synthetase family. TyrS type 1 subfamily. Homodimer.

The protein localises to the cytoplasm. It catalyses the reaction tRNA(Tyr) + L-tyrosine + ATP = L-tyrosyl-tRNA(Tyr) + AMP + diphosphate + H(+). Its function is as follows. Catalyzes the attachment of tyrosine to tRNA(Tyr) in a two-step reaction: tyrosine is first activated by ATP to form Tyr-AMP and then transferred to the acceptor end of tRNA(Tyr). This chain is Tyrosine--tRNA ligase, found in Rickettsia conorii (strain ATCC VR-613 / Malish 7).